We begin with the raw amino-acid sequence, 96 residues long: Co-chaperonin GroES (96 aa).

It belongs to the GroES chaperonin family. In terms of assembly, heptamer of 7 subunits arranged in a ring. Interacts with the chaperonin GroEL.

Its subcellular location is the cytoplasm. Together with the chaperonin GroEL, plays an essential role in assisting protein folding. The GroEL-GroES system forms a nano-cage that allows encapsulation of the non-native substrate proteins and provides a physical environment optimized to promote and accelerate protein folding. GroES binds to the apical surface of the GroEL ring, thereby capping the opening of the GroEL channel. The polypeptide is Co-chaperonin GroES (Cupriavidus necator (strain ATCC 17699 / DSM 428 / KCTC 22496 / NCIMB 10442 / H16 / Stanier 337) (Ralstonia eutropha)).